A 205-amino-acid polypeptide reads, in one-letter code: Protein N-terminal glutamine amidohydrolase (205 aa).

Residues Cys-20, His-74, and Asp-90 contribute to the active site.

It belongs to the NTAQ1 family. Monomer.

It catalyses the reaction N-terminal L-glutaminyl-[protein] + H2O = N-terminal L-glutamyl-[protein] + NH4(+). Functionally, mediates the side-chain deamidation of N-terminal glutamine residues to glutamate, an important step in N-end rule pathway of protein degradation. Conversion of the resulting N-terminal glutamine to glutamate renders the protein susceptible to arginylation, polyubiquitination and degradation as specified by the N-end rule. Does not act on substrates with internal or C-terminal glutamine and does not act on non-glutamine residues in any position. This Drosophila mojavensis (Fruit fly) protein is Protein N-terminal glutamine amidohydrolase (tun).